The sequence spans 201 residues: Natural cytotoxicity triggering receptor 3 (201 aa).

Positions 1-18 (MAWMLLLILIMVHPGSCA) are cleaved as a signal peptide. The Ig-like domain occupies 19 to 126 (LWVSQPPEIR…VGTGNGTRLV (108 aa)). Residues 19 to 135 (LWVSQPPEIR…VVEKEHPQLG (117 aa)) are Extracellular-facing. Cys-39 and Cys-108 are joined by a disulfide. Asn-42 and Asn-121 each carry an N-linked (GlcNAc...) asparagine glycan. Residues 136-156 (AGTVLLLRAGFYAVSFLSVAV) traverse the membrane as a helical segment. At 157–201 (GSTVYYQGKCLTWKGPRRQLPAVVPAPLPPPCGSSAQLLPPVPGG) the chain is on the cytoplasmic side.

The protein belongs to the natural cytotoxicity receptor (NCR) family. In terms of assembly, homodimer in the unliganted form. Interacts with CD3Z. Interacts with and is activated by binding to NCR3LG1. Interacts with and is activated by binding to BAG6. Interacts with and is inhibited by binding to LGALS3.

The protein localises to the cell membrane. In terms of biological role, cell membrane receptor of natural killer/NK cells that is activated by binding of extracellular ligands including BAG6 and NCR3LG1. Stimulates NK cells cytotoxicity toward neighboring cells producing these ligands. It controls, for instance, NK cells cytotoxicity against tumor cells. Engagement of NCR3 by BAG6 also promotes myeloid dendritic cells (DC) maturation, both through killing DCs that did not acquire a mature phenotype, and inducing the release by NK cells of TNFA and IFNG that promote DC maturation. The protein is Natural cytotoxicity triggering receptor 3 (NCR3) of Pan troglodytes (Chimpanzee).